Consider the following 88-residue polypeptide: Large ribosomal subunit protein bL27 (88 aa).

The disordered stretch occupies residues 1–21; that stretch reads MAHKKGQGSTQNNRDSAGRRL.

This sequence belongs to the bacterial ribosomal protein bL27 family.

The sequence is that of Large ribosomal subunit protein bL27 from Helicobacter pylori (strain P12).